The following is a 507-amino-acid chain: ESX-5 secretion system ATPase EccB5 (507 aa).

The helical transmembrane segment at 56–76 (VVASVSAALVICLGSLLWSFI) threads the bilayer.

The protein belongs to the EccB family. Part of the ESX-5 / type VII secretion system (T7SS), which is composed of cytosolic and membrane components. The ESX-5 membrane complex is composed of EccB5, EccC5, EccD5 and EccE5.

Its subcellular location is the cell inner membrane. An ATPase. Part of the ESX-5 specialized secretion system, which is responsible for the secretion of EsxN and a number of PE_PGRS and PPE proteins. The polypeptide is ESX-5 secretion system ATPase EccB5 (Mycobacterium marinum (strain ATCC BAA-535 / M)).